The sequence spans 130 residues: Large ribosomal subunit protein bL17 (130 aa).

It belongs to the bacterial ribosomal protein bL17 family. As to quaternary structure, part of the 50S ribosomal subunit. Contacts protein L32.

The protein is Large ribosomal subunit protein bL17 of Buchnera aphidicola subsp. Acyrthosiphon pisum (strain 5A).